Consider the following 113-residue polypeptide: U11-theraphotoxin-Hhn1f (113 aa).

The first 21 residues, 1–21 (MNTVRVTFLLVFVLAVSLGQA), serve as a signal peptide directing secretion. A propeptide spanning residues 22–74 (DKDENRMEMQEKTEQGKSYLDFAENLLLQKLEELEAKLLEEDSEESRNSRQKR) is cleaved from the precursor. The disordered stretch occupies residues 61-83 (EEDSEESRNSRQKRCIGEGVPCD). Disulfide bonds link C75–C90, C82–C95, and C89–C110.

Belongs to the neurotoxin 14 (magi-1) family. 01 (HNTX-16) subfamily. Expressed by the venom gland.

It is found in the secreted. In terms of biological role, probable ion channel inhibitor. This is U11-theraphotoxin-Hhn1f from Cyriopagopus hainanus (Chinese bird spider).